The chain runs to 68 residues: Conotoxin Vc7.3 (68 aa).

The first 24 residues, 1-24, serve as a signal peptide directing secretion; it reads MIRMGFFLTLTVAVLLTSLICTEA. The propeptide occupies 25 to 45; the sequence is VPTDKRGMERLFDQVLLKDQR. Cystine bridges form between Cys47–Cys55, Cys50–Cys60, and Cys54–Cys65.

This sequence belongs to the conotoxin U superfamily. As to expression, expressed by the venom duct.

It localises to the secreted. This is Conotoxin Vc7.3 from Conus victoriae (Queen Victoria cone).